Reading from the N-terminus, the 439-residue chain is Cell division protein FtsA (439 aa).

Belongs to the FtsA/MreB family. Self-interacts. Interacts with FtsZ.

It is found in the cell inner membrane. Functionally, cell division protein that is involved in the assembly of the Z ring. May serve as a membrane anchor for the Z ring. The chain is Cell division protein FtsA from Shigella flexneri.